Reading from the N-terminus, the 70-residue chain is Movement protein TGBp3 (70 aa).

Over 1–6 the chain is Lumenal; the sequence is MEANTY. Residues 7 to 27 form a helical membrane-spanning segment; it reads LNAIILVLVVTIIAVISTSLV. Over 28–70 the chain is Cytoplasmic; the sequence is RTEPCVIKITGESITVLACKLDAETIRAIADLKPLSVERLSFH.

The protein belongs to the Tymovirales TGBp3 protein family.

It is found in the host endoplasmic reticulum membrane. In terms of biological role, plays a role in viral cell-to-cell propagation, by facilitating genome transport to neighboring plant cells through plasmosdesmata. May induce the formation of granular vesicles derived from the Endoplasmic reticulum, which align on actin filaments. The sequence is that of Movement protein TGBp3 from Potato virus X (PVX).